Reading from the N-terminus, the 374-residue chain is MTSLSLSPAAGPQRSAAAPKAVAVWLLVCAGMVFAMAIIGAITRLTESGLSITEWKPVTGALPPLSEAQWLAEFEKYRQIPEYQLLKRGMSLEEFKGIYFWEWLHRLWGRLIGVVFLLPFVWFWVRGQVSRALAPTLAGLFLLGGLQGFIGWFMVQSGLTERTDVSHYRLALHLGMAFLIYAALLKVALGLLDPAPAPQPAAGRLRPHAWAALALLGVTIVWGAFVAGINAGFAYNTWPLMGGTLAPAEMWTQTPVWLNLLENTAAVQFVHRWLAVVTALVVLSLCWQAWRTGGGTRLRGVAAGLAAATVAQVGLGIATLLSVVWIPLATAHQGGALVLTGLLVWTLHLLRPPETPRQATPLTATPLTEMPAPR.

8 helical membrane-spanning segments follow: residues 22–42, 107–127, 135–155, 172–192, 209–229, 265–285, 306–326, and 327–347; these read VAVW…IGAI, LWGR…WVRG, PTLA…WFMV, LHLG…LGLL, AWAA…VAGI, AAVQ…VLSL, AAAT…VVWI, and PLAT…VWTL. His271 lines the heme pocket. His332 serves as a coordination point for heme.

Belongs to the COX15/CtaA family. Type 2 subfamily. In terms of assembly, interacts with CtaB. Heme b serves as cofactor.

The protein localises to the cell membrane. The catalysed reaction is Fe(II)-heme o + 2 A + H2O = Fe(II)-heme a + 2 AH2. The protein operates within porphyrin-containing compound metabolism; heme A biosynthesis; heme A from heme O: step 1/1. Its function is as follows. Catalyzes the conversion of heme O to heme A by two successive hydroxylations of the methyl group at C8. The first hydroxylation forms heme I, the second hydroxylation results in an unstable dihydroxymethyl group, which spontaneously dehydrates, resulting in the formyl group of heme A. The polypeptide is Heme A synthase (Rhodospirillum centenum (strain ATCC 51521 / SW)).